The sequence spans 851 residues: DNA mismatch repair protein MutS (851 aa).

614-621 (GPNMGGKS) is a binding site for ATP.

Belongs to the DNA mismatch repair MutS family.

Its function is as follows. This protein is involved in the repair of mismatches in DNA. It is possible that it carries out the mismatch recognition step. This protein has a weak ATPase activity. This is DNA mismatch repair protein MutS from Yersinia enterocolitica serotype O:8 / biotype 1B (strain NCTC 13174 / 8081).